The chain runs to 344 residues: UDP-glucose 4-epimerase (344 aa).

Residues 15-17, 36-40, 63-64, Phe-85, and Lys-89 contribute to the NAD(+) site; these read GYI, DNLSN, and DI. Residue 129 to 131 participates in substrate binding; that stretch reads SAT. The active-site Proton acceptor is Tyr-153. Residues Lys-157 and Tyr-181 each contribute to the NAD(+) site. Residues 181-183, 202-204, 220-222, Arg-235, and 297-300 each bind substrate; these read YFN, NNL, SIF, and RKGD.

The protein belongs to the NAD(P)-dependent epimerase/dehydratase family. Homodimer. Requires NAD(+) as cofactor.

It carries out the reaction UDP-alpha-D-glucose = UDP-alpha-D-galactose. It catalyses the reaction UDP-N-acetyl-alpha-D-glucosamine = UDP-N-acetyl-alpha-D-galactosamine. It participates in carbohydrate metabolism; galactose metabolism. Functionally, catalyzes two distinct but analogous reactions: the reversible epimerization of UDP-glucose to UDP-galactose and the reversible epimerization of UDP-N-acetylglucosamine to UDP-N-acetylgalactosamine. The reaction with UDP-Gal plays a critical role in the Leloir pathway of galactose catabolism in which galactose is converted to the glycolytic intermediate glucose 6-phosphate. It contributes to the catabolism of dietary galactose and enables the endogenous biosynthesis of both UDP-Gal and UDP-GalNAc when exogenous sources are limited. Both UDP-sugar interconversions are important in the synthesis of glycoproteins and glycolipids. This Dictyostelium discoideum (Social amoeba) protein is UDP-glucose 4-epimerase (galE).